Consider the following 167-residue polypeptide: Glucose-6-phosphate isomerase (167 aa).

Glu-54 functions as the Proton donor in the catalytic mechanism. Residue His-85 is part of the active site.

This sequence belongs to the GPI family.

It localises to the cytoplasm. It catalyses the reaction alpha-D-glucose 6-phosphate = beta-D-fructose 6-phosphate. The protein operates within carbohydrate biosynthesis; gluconeogenesis. It participates in carbohydrate degradation; glycolysis; D-glyceraldehyde 3-phosphate and glycerone phosphate from D-glucose: step 2/4. In terms of biological role, catalyzes the reversible isomerization of glucose-6-phosphate to fructose-6-phosphate. The chain is Glucose-6-phosphate isomerase from Klebsiella oxytoca.